Reading from the N-terminus, the 746-residue chain is Chitin biosynthesis protein CHS6 (746 aa).

The disordered stretch occupies residues 1 to 25 (MNLFWPSETKKQNEIPGGDYTPGNS). Positions 734-746 (LAWIADLDHTVQP) are CHS5-binding.

The protein belongs to the CHAPS family. In terms of assembly, component of the CHS5/6 complex composed of the 4 CHAPS proteins BCH1, BCH2, BUD7, and CHS6 as well as at least CHS5 and GTP-bound ARF1. The complex interacts with the cargo protein CHS3.

It localises to the golgi apparatus. The protein localises to the trans-Golgi network membrane. In terms of biological role, member of the CHS5-ARF1P-binding proteins (CHAPS) which mediates export of specific cargo proteins, including chitin synthase CHS3. This chain is Chitin biosynthesis protein CHS6 (CHS6), found in Saccharomyces cerevisiae (strain ATCC 204508 / S288c) (Baker's yeast).